Here is a 724-residue protein sequence, read N- to C-terminus: Disks large homolog 4 (724 aa).

2 S-palmitoyl cysteine lipidation sites follow: cysteine 3 and cysteine 5. The interval 15-35 (QDEDTPPLEHSPAHLPNQANS) is disordered. 2 PDZ domains span residues 65-151 (EITL…VMRR) and 160-246 (EIKL…VAKP). Phosphoserine occurs at positions 73 and 142. Tyrosine 240 carries the post-translational modification Phosphotyrosine. Serine 295 is subject to Phosphoserine. Residues 313–393 (RIVIHRGSTG…QTVTIIAQYK (81 aa)) form the PDZ 3 domain. Residues serine 415 and serine 418 each carry the phosphoserine modification. Residue threonine 420 is modified to Phosphothreonine. Phosphoserine is present on residues serine 422, serine 425, serine 449, and serine 480. The region spanning 428–498 (KRGFYIRALF…PSKRRVERRE (71 aa)) is the SH3 domain. Residues 534–709 (ARPIIILGPT…IYHKVKRVIE (176 aa)) form the Guanylate kinase-like domain. Residue tyrosine 580 is modified to Phosphotyrosine. Phosphoserine occurs at positions 606 and 654. A Phosphotyrosine modification is found at tyrosine 715.

The protein belongs to the MAGUK family. Interacts through its PDZ domains with ANO2 and NETO1. Interacts through its first two PDZ domains with GRIN2A, GRIN2B, GRIN2C, GRIN2D. Interacts with ASIC3. Interacts with SEMA4C. Interacts with CXADR. Interacts with KCND2. Interacts with SYNGAP1. Interacts with LRRC4 and LRRC4B. Interacts with ERBB4. Interacts with KCNA1, KCNA2, KCNA3 and KCNA4. Interacts through its first PDZ domain with GRIK2, KCNA4 and CRIPT. Interacts through its second PDZ domain with the PDZ domain of NOS1 or the C-terminus of CAPON. Interacts through its third PDZ domain with NLGN1 and CRIPT, and probably with NLGN2 and NLGN3. Interacts through its guanylate kinase-like domain with KIF13B. Interacts through its guanylate kinase-like domain with DLGAP1/GKAP, DLGAP2, DLGAP3, DLGAP4, MAP1A, BEGAIN and SIPA1L1. Isoform 2 interacts through an L27 domain with HGS/HRS and the first L27 domain of CASK. Interacts with ADR1B and ANKS1B. May interact with HTR2A. Interacts with ADAM22. Interacts with KLHL17 and LGI1. Interacts with FRMPD4 (via C-terminus). Interacts with LRFN1, LRFN2 and LRFN4. Interacts (via N-terminal tandem pair of PDZ domains) with GPER1 (via C-terminus tail motif); the interaction is direct and induces the increase of GPER1 protein levels residing at the plasma membrane surface in a estradiol-independent manner. Interacts (via N-terminus tandem pair of PDZ domains) with NOS1 (via N-terminal domain). Interacts with SHANK3. Interacts with KCNJ4. Interacts with GPR85. Interacts with CACNG2 and MPP2 (via the SH3-Guanylate kinase-like sub-module). Interacts with ADGRB1. Found in a complex with PRR7 and GRIN1. Interacts (via PDZ3 domain and to lesser degree via PDZ2 domain) with PRR7. Component of the postsynaptic hippocampal AMPA-type glutamate receptor (AMPAR) complex, at least composed of pore forming AMPAR subunits GRIA1, GRIA2 and GRIA3 and AMPAR auxiliary proteins SHISA6 and SHISA7. Interacts (via its first two PDZ domains) with SHISA6 and SHISA7 (via PDZ-binding motif); the interaction is direct. Interacts with RPH3A and GRIN2A; this ternary complex regulates NMDA receptor composition at postsynaptic membranes. Interacts with ABR and BCR. Interacts with DGKI (via PDZ-binding motif); controls the localization of DGKI to the synapse. Interacts with C9orf72, SMCR8 and RAB39B. Interacts with ZDHHC5. Interacts with PTEN (via PDZ domain-binding motif); the interaction is induced by NMDA and is required for PTEN location at postsynaptic density. Found in a complex with GRIA1, GRIA2, GRIA3, GRIA4, CACNG8 and CNIH2. Interacts with FAM81A; the interaction facilitates condensate formation via liquid-liquid phase separation. Interacts with ADGRL3. Interacts with SORCS3. Palmitoylated. Palmitoylation is required for targeting to postsynaptic density, plasma membrane and synapses. Palmitoylation by ZDHHC2 occurs when the synaptic activity decreases and induces DLG4 synaptic clustering. Palmitoylation by ZDHHC15 regulates trafficking to the postsynaptic density and function in synaptogenesis. Palmitoylation may play a role in glutamate receptor GRIA1 synapse clustering. Depalmitoylated by ABHD17A and ABHD17B and to a lesser extent by ABHD17C, ABHD12, ABHD13, LYPLA1 and LYPLA2. Undergoes rapid synaptic palmitoylation/depalmitoylation cycles during neuronal development which slow down in mature neurons. Post-translationally, ubiquitinated by MDM2 in response to NMDA receptor activation, leading to proteasome-mediated degradation of DLG4 which is required for AMPA receptor endocytosis. In terms of tissue distribution, brain.

It localises to the cell membrane. Its subcellular location is the postsynaptic density. It is found in the synapse. The protein resides in the cytoplasm. The protein localises to the cell projection. It localises to the axon. Its subcellular location is the dendritic spine. It is found in the dendrite. The protein resides in the presynapse. Its function is as follows. Postsynaptic scaffolding protein that plays a critical role in synaptogenesis and synaptic plasticity by providing a platform for the postsynaptic clustering of crucial synaptic proteins. Interacts with the cytoplasmic tail of NMDA receptor subunits and shaker-type potassium channels. Required for synaptic plasticity associated with NMDA receptor signaling. Overexpression or depletion of DLG4 changes the ratio of excitatory to inhibitory synapses in hippocampal neurons. May reduce the amplitude of ASIC3 acid-evoked currents by retaining the channel intracellularly. May regulate the intracellular trafficking of ADR1B. Also regulates AMPA-type glutamate receptor (AMPAR) immobilization at postsynaptic density keeping the channels in an activated state in the presence of glutamate and preventing synaptic depression. Under basal conditions, cooperates with FYN to stabilize palmitoyltransferase ZDHHC5 at the synaptic membrane through FYN-mediated phosphorylation of ZDHHC5 and its subsequent inhibition of association with endocytic proteins. The chain is Disks large homolog 4 from Homo sapiens (Human).